Reading from the N-terminus, the 245-residue chain is 8-amino-3,8-dideoxy-manno-octulosonate cytidylyltransferase (245 aa).

This sequence belongs to the KdsB family.

It localises to the cytoplasm. It carries out the reaction 8-amino-3,8-dideoxy-alpha-D-manno-octulosonate + CTP = CMP-8-amino-3,8-dideoxy-alpha-D-manno-oct-2-ulosonate + diphosphate. The protein operates within bacterial outer membrane biogenesis; lipopolysaccharide biosynthesis. In terms of biological role, activates KDO8N (a required 8-carbon sugar) for incorporation into bacterial lipopolysaccharide in the Shewanella genus. The polypeptide is 8-amino-3,8-dideoxy-manno-octulosonate cytidylyltransferase (Shewanella woodyi (strain ATCC 51908 / MS32)).